Consider the following 228-residue polypeptide: Cytidylate kinase (228 aa).

An ATP-binding site is contributed by 11-19 (GPAGTGKSS).

Belongs to the cytidylate kinase family. Type 1 subfamily.

It localises to the cytoplasm. It catalyses the reaction CMP + ATP = CDP + ADP. The enzyme catalyses dCMP + ATP = dCDP + ADP. This is Cytidylate kinase from Mycolicibacterium paratuberculosis (strain ATCC BAA-968 / K-10) (Mycobacterium paratuberculosis).